The chain runs to 355 residues: Ubiquinone biosynthesis protein COQ4 homolog, mitochondrial (355 aa).

Residues histidine 134, aspartate 135, histidine 138, and glutamate 150 each coordinate Zn(2+).

The protein belongs to the COQ4 family. In terms of assembly, component of a multi-subunit COQ enzyme complex. The cofactor is Zn(2+).

The protein resides in the mitochondrion inner membrane. It catalyses the reaction a 4-hydroxy-3-methoxy-5-(all-trans-polyprenyl)benzoate + H(+) = a 2-methoxy-6-(all-trans-polyprenyl)phenol + CO2. The protein operates within cofactor biosynthesis; ubiquinone biosynthesis. In terms of biological role, lyase that catalyzes the C1-decarboxylation of 4-hydroxy-3-methoxy-5-(all-trans-polyprenyl)benzoic acid into 2-methoxy-6-(all-trans-polyprenyl)phenol during ubiquinone biosynthesis. The polypeptide is Ubiquinone biosynthesis protein COQ4 homolog, mitochondrial (Plasmodium vivax (strain Salvador I)).